The chain runs to 98 residues: Cystatin-B (98 aa).

Met-1 is subject to N-acetylmethionine. The Secondary area of contact signature appears at 46–50 (QVVAG).

The protein belongs to the cystatin family.

Its subcellular location is the cytoplasm. Its function is as follows. This is an intracellular thiol proteinase inhibitor. The protein is Cystatin-B (CSTB) of Sus scrofa (Pig).